The primary structure comprises 212 residues: GTP-binding nuclear protein Ran (212 aa).

The 165-residue stretch at 3 to 167 folds into the Small GTPase Ran-type domain; that stretch reads EKEQIKLVLV…VWLTSKLLGN (165 aa). 14-21 contributes to the GTP binding site; that stretch reads DGGVGKTT. Positions 33–41 are switch-I; that stretch reads PRYIPTLGV. GTP is bound by residues Gly-64, 118–121, and 146–148; these read NKVD and SAK. The tract at residues 64-80 is switch-II; sequence GQEKFGGLRDGYYIQGN.

Belongs to the small GTPase superfamily. Ran family. In terms of assembly, found in a nuclear export complex with RanGTP, exportin and pre-miRNA.

It localises to the nucleus. Its function is as follows. GTP-binding protein involved in nucleocytoplasmic transport. Required for the import of protein into the nucleus and also for RNA export. Involved in chromatin condensation and control of cell cycle. In Dictyostelium discoideum (Social amoeba), this protein is GTP-binding nuclear protein Ran (ranA).